Reading from the N-terminus, the 460-residue chain is Arginine biosynthesis bifunctional protein ArgJ, chloroplastic (460 aa).

The N-terminal 26 residues, 1 to 26 (MYLSVPHYPSLKFTAFQSHKRNFRVF), are a transit peptide targeting the chloroplast. Substrate-binding residues include Thr-202, Lys-228, Thr-239, Glu-328, Asn-455, and Thr-460. Thr-239 functions as the Nucleophile in the catalytic mechanism.

It belongs to the ArgJ family. Heterodimer of an alpha and a beta chain.

Its subcellular location is the plastid. It localises to the chloroplast. The enzyme catalyses N(2)-acetyl-L-ornithine + L-glutamate = N-acetyl-L-glutamate + L-ornithine. The catalysed reaction is L-glutamate + acetyl-CoA = N-acetyl-L-glutamate + CoA + H(+). Its pathway is amino-acid biosynthesis; L-arginine biosynthesis; L-ornithine and N-acetyl-L-glutamate from L-glutamate and N(2)-acetyl-L-ornithine (cyclic): step 1/1. It participates in amino-acid biosynthesis; L-arginine biosynthesis; N(2)-acetyl-L-ornithine from L-glutamate: step 1/4. Functionally, catalyzes two activities which are involved in the cyclic version of arginine biosynthesis: the synthesis of acetylglutamate from glutamate and acetyl-CoA, and of ornithine by transacetylation between acetylornithine and glutamate. This chain is Arginine biosynthesis bifunctional protein ArgJ, chloroplastic, found in Citrullus lanatus (Watermelon).